The following is a 278-amino-acid chain: MNKKPLEQIKNVTNVTGYRQVSLWKREDLQHPQPDELAEEVPVALVYNGISHVVMMASPKDLEQFAVGFSLSEGIIEHRREIFGMDVVAVCNGLEVQIELSSRRFMGLKARRRALAGRTGCGVCGVEQLNDIGKPVQPLPFTQSFDLANLDQALAHLNDFQPVGRLTGCTHAAAWVRLTGELAGGFEDVGRHVALDKLLGRRAEVGEGWQHGAALVSSRASYEMVQKAAMCGVEILFAVSAATTLAVEVAERCNLTLVGFCKPGRATVYTHPQRLIAG.

The active-site Cysteine persulfide intermediate is C121. 260-265 serves as a coordination point for Mo-bis(molybdopterin guanine dinucleotide); that stretch reads FCKPGR.

The protein belongs to the FdhD family.

It is found in the cytoplasm. Required for formate dehydrogenase (FDH) activity. Acts as a sulfur carrier protein that transfers sulfur from IscS to the molybdenum cofactor prior to its insertion into FDH. The polypeptide is Sulfur carrier protein FdhD (Klebsiella pneumoniae subsp. pneumoniae (strain ATCC 700721 / MGH 78578)).